The chain runs to 92 residues: Long neurotoxin 1 (92 aa).

The signal sequence occupies residues 1 to 21 (MKTLLLTLVVVTIVCLDLGYT). 5 disulfides stabilise this stretch: Cys24–Cys42, Cys35–Cys63, Cys48–Cys52, Cys67–Cys79, and Cys80–Cys85.

Belongs to the three-finger toxin family. Long-chain subfamily. Type II alpha-neurotoxin sub-subfamily. As to expression, expressed by the venom gland.

It localises to the secreted. Binds with high affinity to muscular (alpha-1/CHRNA1) and neuronal (alpha-7/CHRNA7) nicotinic acetylcholine receptor (nAChR) and inhibits acetylcholine from binding to the receptor, thereby impairing neuromuscular and neuronal transmission. The polypeptide is Long neurotoxin 1 (Oxyuranus microlepidotus (Inland taipan)).